We begin with the raw amino-acid sequence, 602 residues long: Myotubularin (602 aa).

Positions 1-40 (MASSSASDCDAHPVERESMRKVSQDGVRQDMSKSGPRLPG) are disordered. The span at 9-31 (CDAHPVERESMRKVSQDGVRQDM) shows a compositional bias: basic and acidic residues. The residue at position 18 (S18) is a Phosphoserine. One can recognise a GRAM domain in the interval 28-97 (RQDMSKSGPR…GVISRIEKMG (70 aa)). Residues 163 to 538 (GWAIYNPVEE…RHLELWVNYY (376 aa)) form the Myotubularin phosphatase domain. Residues N288, N313, and I314 each contribute to the a 1,2-diacyl-sn-glycero-3-phospho-(1D-myo-inositol-3,5-bisphosphate) site. N288, N313, and I314 together coordinate a 1,2-diacyl-sn-glycero-3-phospho-(1D-myo-inositol-3-phosphate). Catalysis depends on C375, which acts as the Phosphocysteine intermediate. Positions 376, 377, 378, 379, 380, 381, 417, and 421 each coordinate a 1,2-diacyl-sn-glycero-3-phospho-(1D-myo-inositol-3,5-bisphosphate). Residues S376, D377, G378, W379, D380, and R381 each contribute to the a 1,2-diacyl-sn-glycero-3-phospho-(1D-myo-inositol-3-phosphate) site. R421 is a binding site for a 1,2-diacyl-sn-glycero-3-phospho-(1D-myo-inositol-3-phosphate). Residue T495 is modified to Phosphothreonine. A compositionally biased stretch (polar residues) spans 578–592 (PTKLTDSSTPPSGSA). A disordered region spans residues 578 to 602 (PTKLTDSSTPPSGSAQIAPRMQTHF).

The protein belongs to the protein-tyrosine phosphatase family. Non-receptor class myotubularin subfamily. As to quaternary structure, heterodimer with MTMR12. Interacts with KMT2A/MLL1 (via SET domain). Interacts with DES in skeletal muscle but not in cardiac muscle. Interacts with SPEG.

The protein resides in the cytoplasm. The protein localises to the cell membrane. It localises to the cell projection. Its subcellular location is the filopodium. It is found in the ruffle. The protein resides in the late endosome. The protein localises to the myofibril. It localises to the sarcomere. The catalysed reaction is a 1,2-diacyl-sn-glycero-3-phospho-(1D-myo-inositol-3-phosphate) + H2O = a 1,2-diacyl-sn-glycero-3-phospho-(1D-myo-inositol) + phosphate. It carries out the reaction a 1,2-diacyl-sn-glycero-3-phospho-(1D-myo-inositol-3,5-bisphosphate) + H2O = a 1,2-diacyl-sn-glycero-3-phospho-(1D-myo-inositol-5-phosphate) + phosphate. The enzyme catalyses 1,2-dioctanoyl-sn-glycero-3-phospho-(1-D-myo-inositol-3-phosphate) + H2O = 1,2-dioctanoyl-sn-glycero-3-phospho-(1D-myo-inositol) + phosphate. It catalyses the reaction 1,2-dioctanoyl-sn-glycero-3-phospho-(1D-myo-inositol-3,5-bisphosphate) + H2O = 1,2-dioctanoyl-sn-glycero-3-phospho-(1D-myo-inositol-5-phosphate) + phosphate. The catalysed reaction is 1,2-dihexadecanoyl-sn-glycero-3-phospho-(1D-myo-inositol-3,5-phosphate) + H2O = 1,2-dihexadecanoyl-sn-glycero-3-phospho-(1D-myo-inositol-5-phosphate) + phosphate. Allosterically activated by phosphatidylinositol 5-phosphate (PI5P). Functionally, lipid phosphatase which dephosphorylates phosphatidylinositol 3-monophosphate (PI3P) and phosphatidylinositol 3,5-bisphosphate (PI(3,5)P2). Has also been shown to dephosphorylate phosphotyrosine- and phosphoserine-containing peptides. Negatively regulates EGFR degradation through regulation of EGFR trafficking from the late endosome to the lysosome. Plays a role in vacuolar formation and morphology. Regulates desmin intermediate filament assembly and architecture. Plays a role in mitochondrial morphology and positioning. Required for skeletal muscle maintenance but not for myogenesis. In skeletal muscles, stabilizes MTMR12 protein levels. In Rattus norvegicus (Rat), this protein is Myotubularin.